Here is a 183-residue protein sequence, read N- to C-terminus: Protein jagunal homolog 1 (183 aa).

The Cytoplasmic portion of the chain corresponds to 1–39 (MASRAGPRAAGTDGSDFQHRERVAMHYQMSVTLKYEIKK). At serine 3 the chain carries Phosphoserine. A helical transmembrane segment spans residues 40 to 60 (LIYVHLVIWLLLVAKMSVGHL). Residues 61–71 (RLLSHDQVAMP) are Lumenal-facing. Residues 72 to 92 (YQWEYPYLLSILPSLLGLLSF) traverse the membrane as a helical segment. The Cytoplasmic portion of the chain corresponds to 93 to 96 (PRNN). A helical transmembrane segment spans residues 97–117 (ISYLVLSMISMGLFSIAPLIY). Topologically, residues 118–137 (GSMEMFPAAQQLYRHGKAYR) are lumenal. The chain crosses the membrane as a helical span at residues 138-158 (FLFGFSAVSIMYLVLVLAVQV). Residues 159-183 (HAWQLYYSKKLLDSWFTSTQEKKHK) lie on the Cytoplasmic side of the membrane.

It belongs to the jagunal family. As to quaternary structure, interacts with COPA, COPB2 and COPG2. As to expression, ubiquitously expressed.

Its subcellular location is the endoplasmic reticulum membrane. Functionally, endoplasmic reticulum transmembrane protein involved in vesicle-mediated transport, which is required for neutrophil function. Required for vesicle-mediated transport; it is however unclear whether it is involved in early secretory pathway or intracellular protein transport. Acts as a regulator of neutrophil function, probably via its role in vesicle-mediated transport: required for defense against fungal pathogens and for granulocyte colony-stimulating factor (GM-CSF) signaling pathway; possibly by regulating glycosylation and/or targeting of proteins contributing to the viability and migration of neutrophils. This is Protein jagunal homolog 1 from Homo sapiens (Human).